The following is a 215-amino-acid chain: Adenylate kinase (215 aa).

10–15 contacts ATP; the sequence is GAGKGT. An NMP region spans residues 30-59; sequence STGDMFRLAIKEGTELGKKAKEFMDQGDLV. AMP-binding positions include Thr31, Arg36, 57–59, 85–88, and Gln92; these read DLV and GFPR. An LID region spans residues 126 to 163; it reads GRRICPTCGTAYHVVYNPPKEEGICDKDGSQLIQRDDD. An ATP-binding site is contributed by Arg127. Cys130, Cys133, Cys150, and Asp153 together coordinate Zn(2+). Positions 160 and 171 each coordinate AMP. Arg199 lines the ATP pocket.

It belongs to the adenylate kinase family. In terms of assembly, monomer.

Its subcellular location is the cytoplasm. It catalyses the reaction AMP + ATP = 2 ADP. Its pathway is purine metabolism; AMP biosynthesis via salvage pathway; AMP from ADP: step 1/1. In terms of biological role, catalyzes the reversible transfer of the terminal phosphate group between ATP and AMP. Plays an important role in cellular energy homeostasis and in adenine nucleotide metabolism. The sequence is that of Adenylate kinase from Oceanobacillus iheyensis (strain DSM 14371 / CIP 107618 / JCM 11309 / KCTC 3954 / HTE831).